The primary structure comprises 200 residues: UPF0637 protein LCK_01372 (200 aa).

The protein belongs to the UPF0637 family.

This is UPF0637 protein LCK_01372 from Leuconostoc citreum (strain KM20).